The sequence spans 471 residues: Monocarboxylate transporter 4 (471 aa).

Topologically, residues 1-17 (MGGAVVDEGPTGIKAPD) are cytoplasmic. The chain crosses the membrane as a helical span at residues 18–38 (GGWGWAVLFGCFIITGFSYAF). The Extracellular portion of the chain corresponds to 39 to 61 (PKAVSVFFKELMHEFGIGYSDTA). Residues 62 to 82 (WISSILLAMLYGTGPLCSMCV) traverse the membrane as a helical segment. Over 83 to 84 (NR) the chain is Cytoplasmic. Residues 85-105 (FGCRPVMLVGGLFASLGMVAA) form a helical membrane-spanning segment. The Extracellular segment spans residues 106–109 (SFCR). A helical transmembrane segment spans residues 110–130 (SIIQIYLTTGVITGLGLALNF). Residues 131–149 (QPSLIMLNRYFNKRRPMAN) are Cytoplasmic-facing. The chain crosses the membrane as a helical span at residues 150-170 (GLAAAGSPVFLCALSPLGQLL). The Extracellular segment spans residues 171 to 179 (QDHYGWRGG). A helical transmembrane segment spans residues 180 to 200 (FLILGGLLLNCCVCAALMRPL). At 201-231 (VAPQASGGAEPHGPQRPSPRLLDLSVFRDRG) the chain is on the cytoplasmic side. A helical membrane pass occupies residues 232–252 (FLIYAVAASIMVLGLFVPPVF). The Extracellular portion of the chain corresponds to 253 to 267 (VVSYAKDMGVPDTKA). Residues 268–288 (AFLLTILGFIDIFARPTAGFI) form a helical membrane-spanning segment. Residues 289–298 (TGLKKVRPYS) are Cytoplasmic-facing. Residues 299–319 (VYLFSFAMFFNGFTDLTGSTA) form a helical membrane-spanning segment. Topologically, residues 320 to 321 (SD) are extracellular. The helical transmembrane segment at 322–342 (YGGLVVFCIFFGISYGMVGAL) threads the bilayer. Topologically, residues 343-355 (QFEVLMAIVGTQK) are cytoplasmic. A helical transmembrane segment spans residues 356–376 (FSSAIGLVLLLEAVAVLIGPP). Topologically, residues 377 to 391 (SGGKLLDATKVYKYV) are extracellular. The helical transmembrane segment at 392–412 (FILAGAEVLTSSLVLLLGNFF) threads the bilayer. Residues 413–471 (CIGKRKRPEVTKPEEVASEEEKLHKPPVDVRVDSREVEHFLKAEPEKNGEVVHTPETSV) are Cytoplasmic-facing. 2 basolateral sorting signal regions span residues 429–447 (ASEE…VDSR) and 447–471 (REVE…ETSV). Position 430 is a phosphoserine (Ser430). A Phosphothreonine modification is found at Thr466. Ser470 is modified (phosphoserine).

The protein belongs to the major facilitator superfamily. Monocarboxylate porter (TC 2.A.1.13) family. As to quaternary structure, interacts with BSG; interaction mediates SLC16A3 targeting to the plasma membrane. As to expression, detected in testis, small intestine, parotid gland, lung and brain. Small amounts are detected in heart, kidney and spleen. Expressed in skeletal muscle.

Its subcellular location is the cell membrane. It localises to the basolateral cell membrane. It catalyses the reaction (S)-lactate(in) + H(+)(in) = (S)-lactate(out) + H(+)(out). It carries out the reaction pyruvate(out) + H(+)(out) = pyruvate(in) + H(+)(in). In terms of biological role, proton-dependent transporter of monocarboxylates such as L-lactate and pyruvate. Plays a predominant role in the L-lactate efflux from highly glycolytic cells. The protein is Monocarboxylate transporter 4 (Slc16a3) of Rattus norvegicus (Rat).